Reading from the N-terminus, the 356-residue chain is Tyrosine recombinase XerS (356 aa).

The 106-residue stretch at 16–121 (IMPWYVLEYY…ALSSLFKYLT (106 aa)) folds into the Core-binding (CB) domain. The Tyr recombinase domain occupies 169 to 354 (EFLEYIDCEY…VNDEQKNALD (186 aa)). Catalysis depends on residues R210, K234, H306, R309, and H332. Y341 serves as the catalytic O-(3'-phospho-DNA)-tyrosine intermediate.

It belongs to the 'phage' integrase family. XerS subfamily.

It localises to the cytoplasm. Its activity is regulated as follows. FtsK is required for recombination. Its function is as follows. Site-specific tyrosine recombinase, which acts by catalyzing the cutting and rejoining of the recombining DNA molecules. Essential to convert dimers of the bacterial chromosome into monomers to permit their segregation at cell division. This Streptococcus agalactiae serotype Ia (strain ATCC 27591 / A909 / CDC SS700) protein is Tyrosine recombinase XerS.